We begin with the raw amino-acid sequence, 481 residues long: Glutamyl-tRNA(Gln) amidotransferase subunit A (481 aa).

Active-site charge relay system residues include lysine 76 and serine 151. The Acyl-ester intermediate role is filled by serine 175.

The protein belongs to the amidase family. GatA subfamily. As to quaternary structure, heterotrimer of A, B and C subunits.

The enzyme catalyses L-glutamyl-tRNA(Gln) + L-glutamine + ATP + H2O = L-glutaminyl-tRNA(Gln) + L-glutamate + ADP + phosphate + H(+). Its function is as follows. Allows the formation of correctly charged Gln-tRNA(Gln) through the transamidation of misacylated Glu-tRNA(Gln) in organisms which lack glutaminyl-tRNA synthetase. The reaction takes place in the presence of glutamine and ATP through an activated gamma-phospho-Glu-tRNA(Gln). In Chlorobaculum parvum (strain DSM 263 / NCIMB 8327) (Chlorobium vibrioforme subsp. thiosulfatophilum), this protein is Glutamyl-tRNA(Gln) amidotransferase subunit A.